The primary structure comprises 332 residues: L-lactate dehydrogenase C chain (332 aa).

Residues 29 to 57 (GAVGMACAICILLKDLADELALVDVAVDK) and R99 contribute to the NAD(+) site. 3 residues coordinate substrate: R106, N138, and R169. Residue N138 participates in NAD(+) binding. H193 acts as the Proton acceptor in catalysis. T248 contributes to the substrate binding site. S301 carries the post-translational modification Phosphoserine.

Belongs to the LDH/MDH superfamily. LDH family. In terms of assembly, homotetramer. Interacts with RABL2/RABL2A; binds preferentially to GTP-bound RABL2.

It is found in the cytoplasm. The enzyme catalyses (S)-lactate + NAD(+) = pyruvate + NADH + H(+). It functions in the pathway fermentation; pyruvate fermentation to lactate; (S)-lactate from pyruvate: step 1/1. Its function is as follows. Possible role in sperm motility. The sequence is that of L-lactate dehydrogenase C chain (LDHC) from Sus scrofa (Pig).